A 522-amino-acid polypeptide reads, in one-letter code: 2-isopropylmalate synthase (522 aa).

The Pyruvate carboxyltransferase domain occupies 5 to 267; sequence VIIFDTTLRD…ETGINAKEIH (263 aa). 4 residues coordinate Mn(2+): Asp14, His202, His204, and Asn238. A regulatory domain region spans residues 392 to 522; it reads QLQQLVVQSD…MQKNRELGGV (131 aa).

It belongs to the alpha-IPM synthase/homocitrate synthase family. LeuA type 1 subfamily. In terms of assembly, homodimer. The cofactor is Mn(2+).

The protein resides in the cytoplasm. The enzyme catalyses 3-methyl-2-oxobutanoate + acetyl-CoA + H2O = (2S)-2-isopropylmalate + CoA + H(+). It functions in the pathway amino-acid biosynthesis; L-leucine biosynthesis; L-leucine from 3-methyl-2-oxobutanoate: step 1/4. In terms of biological role, catalyzes the condensation of the acetyl group of acetyl-CoA with 3-methyl-2-oxobutanoate (2-ketoisovalerate) to form 3-carboxy-3-hydroxy-4-methylpentanoate (2-isopropylmalate). This chain is 2-isopropylmalate synthase, found in Shewanella baltica (strain OS185).